The following is a 1071-amino-acid chain: DNA-directed RNA polymerase subunit beta (1071 aa).

It belongs to the RNA polymerase beta chain family. As to quaternary structure, in plastids the minimal PEP RNA polymerase catalytic core is composed of four subunits: alpha, beta, beta', and beta''. When a (nuclear-encoded) sigma factor is associated with the core the holoenzyme is formed, which can initiate transcription.

Its subcellular location is the plastid. It localises to the chloroplast. It carries out the reaction RNA(n) + a ribonucleoside 5'-triphosphate = RNA(n+1) + diphosphate. Functionally, DNA-dependent RNA polymerase catalyzes the transcription of DNA into RNA using the four ribonucleoside triphosphates as substrates. The polypeptide is DNA-directed RNA polymerase subunit beta (Panax ginseng (Korean ginseng)).